Here is a 271-residue protein sequence, read N- to C-terminus: GPN-loop GTPase 3 (271 aa).

13 to 18 provides a ligand contact to GTP; that stretch reads GAGKST. The Gly-Pro-Asn (GPN)-loop; involved in dimer interface motif lies at 70–72; it reads GPN. 173–176 provides a ligand contact to GTP; the sequence is SKVD.

This sequence belongs to the GPN-loop GTPase family. Heterodimers with GPN1 or GPN2. Binds to RNA polymerase II (RNAPII).

Its function is as follows. Small GTPase required for proper nuclear import of RNA polymerase II and III (RNAPII and RNAPIII). May act at an RNAP assembly step prior to nuclear import. This Eremothecium gossypii (strain ATCC 10895 / CBS 109.51 / FGSC 9923 / NRRL Y-1056) (Yeast) protein is GPN-loop GTPase 3.